A 1050-amino-acid chain; its full sequence is Nuclear pore complex-interacting protein family member B3 (1050 aa).

The chain crosses the membrane as a helical span at residues 63–87 (VIIAFPTSYKVVITLWIVYLWVSLL). Disordered regions lie at residues 241 to 262 (NRMGHQPPPPTQQHSITDNSLS), 290 to 574 (LTPL…NIKT), and 785 to 1050 (ERLR…RRLS). Polar residues predominate over residues 252–262 (QQHSITDNSLS). Over residues 349–359 (PLPPSALPSAP) the composition is skewed to pro residues. Composition is skewed to basic and acidic residues over residues 406 to 416 (DNIKTPAERLR), 448 to 458 (DNIKTPAERLR), 490 to 500 (DNIKTPAERLR), 528 to 538 (DNIKTPAERLR), 820 to 830 (DNIKTPAERLR), 862 to 872 (DNIKTPAERLR), and 904 to 914 (DNIKTPAERLR).

This sequence belongs to the NPIP family.

It localises to the membrane. This chain is Nuclear pore complex-interacting protein family member B3 (NPIPB3), found in Homo sapiens (Human).